The primary structure comprises 529 residues: GMP synthase [glutamine-hydrolyzing] (529 aa).

Positions 16-205 constitute a Glutamine amidotransferase type-1 domain; it reads PVLVVDFGAQ…LHDFAGLDAD (190 aa). The Nucleophile role is filled by Cys93. Catalysis depends on residues His179 and Glu181. The 198-residue stretch at 206 to 403 folds into the GMPS ATP-PPase domain; that stretch reads WTAANIAGVL…LDLPEEIVAR (198 aa). An ATP-binding site is contributed by 233–239; that stretch reads SGGVDSA.

In terms of assembly, homodimer.

It carries out the reaction XMP + L-glutamine + ATP + H2O = GMP + L-glutamate + AMP + diphosphate + 2 H(+). It functions in the pathway purine metabolism; GMP biosynthesis; GMP from XMP (L-Gln route): step 1/1. Functionally, catalyzes the synthesis of GMP from XMP. The sequence is that of GMP synthase [glutamine-hydrolyzing] from Mycobacterium leprae (strain Br4923).